A 148-amino-acid polypeptide reads, in one-letter code: Calmodulin-related protein 97A (148 aa).

EF-hand domains lie at 7–42, 43–78, 80–115, and 116–148; these read EQIAEFKDAFVQFDKEGTGKIATRELGTLMRTLGQN, PTEAELQDLIAEAENNNNGQLNFTEFCGIMAKQMRE, DTEEEMREAFKIFDRDGDGFISPAELRFVMINLGEK, and VTDEEIDEMIREADFDGDGMINYEEFVWMISQK. Ca(2+) is bound by residues Asp20, Thr24, Lys26, Glu31, Asn58, Asn60, Gln62, Glu67, Asp93, Asp95, Asp97, Glu104, Asp129, Asp131, Asp133, Met135, and Glu140.

Belongs to the calmodulin family.

Functionally, may be involved in calcium-mediated signal transduction. The protein is Calmodulin-related protein 97A (Acam) of Drosophila melanogaster (Fruit fly).